We begin with the raw amino-acid sequence, 20 residues long: Cytotoxin drCT-1 (20 aa).

This sequence belongs to the three-finger toxin family. Short-chain subfamily. Type IA cytotoxin sub-subfamily. In terms of assembly, monomer in solution; Homodimer and oligomer in the presence of negatively charged lipids forming a pore with a size ranging between 20 and 30 Angstroms. Expressed by the venom gland.

Its subcellular location is the secreted. It is found in the target cell membrane. Its function is as follows. This three-finger cytotoxin has antiproliferative, cytotoxic and apoptotic activities. Both in vivo and in vitro experimental results suggests that this protein possess anticancer potential. Also shows neurotoxicity, cardiotoxicity and myotoxicity. The protein is Cytotoxin drCT-1 of Daboia russelii (Russel's viper).